The sequence spans 901 residues: Probable inorganic carbon transporter subunit DabA (901 aa).

Zn(2+) contacts are provided by Cys424, Asp426, His606, and Cys621.

The protein belongs to the inorganic carbon transporter (TC 9.A.2) DabA family. In terms of assembly, forms a complex with DabB. Zn(2+) serves as cofactor.

It is found in the cell membrane. In terms of biological role, part of an energy-coupled inorganic carbon pump. This chain is Probable inorganic carbon transporter subunit DabA, found in Staphylococcus aureus (strain USA300).